The chain runs to 78 residues: UPF0349 protein BLi03401/BL03152 (78 aa).

Belongs to the UPF0349 family.

In Bacillus licheniformis (strain ATCC 14580 / DSM 13 / JCM 2505 / CCUG 7422 / NBRC 12200 / NCIMB 9375 / NCTC 10341 / NRRL NRS-1264 / Gibson 46), this protein is UPF0349 protein BLi03401/BL03152.